Consider the following 1149-residue polypeptide: Eukaryotic translation initiation factor 3 subunit A (1149 aa).

One can recognise a PCI domain in the interval 317–498; it reads IQRMTSHVLI…HSVHFGTDLS (182 aa). Disordered stretches follow at residues 496-515 and 811-1149; these read DLSE…QSMP and EEER…KHHR. The segment covering 811–885 has biased composition (basic and acidic residues); that stretch reads EEERRRIEEE…APRGEKEERG (75 aa). Residues 886–895 are compositionally biased toward gly residues; it reads GGGGGGGAWR. Residues 908–924 show a composition bias toward basic and acidic residues; the sequence is AKPESDWRNAREAREPA. Residues 925-937 show a composition bias toward low complexity; sequence PESAGASSAAAPA. 3 stretches are compositionally biased toward basic and acidic residues: residues 961–970, 1005–1095, and 1113–1132; these read RPPRGDDREP, GPMR…DRRG, and EPAK…KEAR.

This sequence belongs to the eIF-3 subunit A family. As to quaternary structure, component of the eukaryotic translation initiation factor 3 (eIF-3) complex.

Its subcellular location is the cytoplasm. In terms of biological role, RNA-binding component of the eukaryotic translation initiation factor 3 (eIF-3) complex, which is involved in protein synthesis of a specialized repertoire of mRNAs and, together with other initiation factors, stimulates binding of mRNA and methionyl-tRNAi to the 40S ribosome. The eIF-3 complex specifically targets and initiates translation of a subset of mRNAs involved in cell proliferation. This chain is Eukaryotic translation initiation factor 3 subunit A, found in Culex quinquefasciatus (Southern house mosquito).